Here is a 79-residue protein sequence, read N- to C-terminus: uncharacterized protein (79 aa).

This is an uncharacterized protein from Helicobacter pylori (strain ATCC 700392 / 26695) (Campylobacter pylori).